The primary structure comprises 800 residues: Endoglucanase (800 aa).

Residues 1–30 (MMLRKKTKQLISSILILVLLLSLFPTALAA) form the signal peptide. E190 acts as the Proton donor in catalysis. E305 (nucleophile) is an active-site residue. Residues 761 to 800 (AATTEPVEPEPVDPGEETPPVDEKEAKTEQKEAEKEEKEE) form a disordered region. Acidic residues predominate over residues 767-780 (VEPEPVDPGEETPP). The segment covering 781-800 (VDEKEAKTEQKEAEKEEKEE) has biased composition (basic and acidic residues).

The protein belongs to the glycosyl hydrolase 5 (cellulase A) family.

It carries out the reaction Endohydrolysis of (1-&gt;4)-beta-D-glucosidic linkages in cellulose, lichenin and cereal beta-D-glucans.. The polypeptide is Endoglucanase (Halalkalibacter akibai (strain ATCC 43226 / DSM 21942 / CIP 109018 / JCM 9157 / 1139) (Bacillus akibai)).